The following is a 740-amino-acid chain: Probable apyrase 7 (740 aa).

Residues 1 to 113 (MVFGRITELF…PSTRRKLIRA (113 aa)) are Cytoplasmic-facing. Residues 114–134 (VMIVMCLFLFAFLVYIVSMYI) form a helical membrane-spanning segment. Topologically, residues 135-581 (YTNWSRGASR…LKSYETLSMK (447 aa)) are extracellular. N-linked (GlcNAc...) asparagine glycosylation is present at N137. 147 to 157 (VVFDCGSTGTR) is a binding site for ATP. The N-linked (GlcNAc...) asparagine glycan is linked to N208. E284 acts as the Proton acceptor in catalysis. 309–319 (GALDLGGSSLQ) lines the ATP pocket. 4 N-linked (GlcNAc...) asparagine glycosylation sites follow: N330, N374, N439, and N484. A helical transmembrane segment spans residues 582–602 (INPIALISILILSLLLLLCAL). At 603–740 (SRVSNCLPRF…SLADSHMLKM (138 aa)) the chain is on the cytoplasmic side. Residues 706–740 (FWSSPRRSQMRLQSRRSQSREDLSSSLADSHMLKM) form a disordered region. Low complexity predominate over residues 708–721 (SSPRRSQMRLQSRR).

It belongs to the GDA1/CD39 NTPase family. It depends on Ca(2+) as a cofactor. Detected in mature pollen grains. Also expressed in more diverse tissues such as roots, leaves, stems, pistils and sepals. More particularly expressed in the vascular bundle.

The protein resides in the membrane. The catalysed reaction is a ribonucleoside 5'-triphosphate + 2 H2O = a ribonucleoside 5'-phosphate + 2 phosphate + 2 H(+). Its function is as follows. Catalyzes the hydrolysis of phosphoanhydride bonds of nucleoside tri- and di-phosphates. Involved in the regulation of pollen and anther development. This is Probable apyrase 7 (APY7) from Arabidopsis thaliana (Mouse-ear cress).